A 303-amino-acid chain; its full sequence is Acetaldehyde dehydrogenase 2 (303 aa).

Cys-130 functions as the Acyl-thioester intermediate in the catalytic mechanism. NAD(+) contacts are provided by residues 161 to 169 (SVGPGTRKN) and Asn-272.

This sequence belongs to the acetaldehyde dehydrogenase family.

It catalyses the reaction acetaldehyde + NAD(+) + CoA = acetyl-CoA + NADH + H(+). The sequence is that of Acetaldehyde dehydrogenase 2 from Burkholderia vietnamiensis (strain G4 / LMG 22486) (Burkholderia cepacia (strain R1808)).